Consider the following 317-residue polypeptide: Putative methyltransferase YMR310C (317 aa).

Phosphoserine is present on Ser190.

The protein belongs to the class IV-like SAM-binding methyltransferase superfamily.

It is found in the nucleus. The sequence is that of Putative methyltransferase YMR310C from Saccharomyces cerevisiae (strain ATCC 204508 / S288c) (Baker's yeast).